The sequence spans 140 residues: ATP synthase epsilon chain (140 aa).

It belongs to the ATPase epsilon chain family. In terms of assembly, F-type ATPases have 2 components, CF(1) - the catalytic core - and CF(0) - the membrane proton channel. CF(1) has five subunits: alpha(3), beta(3), gamma(1), delta(1), epsilon(1). CF(0) has three main subunits: a, b and c.

The protein resides in the cell inner membrane. Its function is as follows. Produces ATP from ADP in the presence of a proton gradient across the membrane. In Yersinia pseudotuberculosis serotype O:1b (strain IP 31758), this protein is ATP synthase epsilon chain.